The following is a 326-amino-acid chain: MISDRQLSILNAIVEDYVDLGQPIGSKTLIERHKLNVSPATIRNEMKQLEDLELIEKTHTSSGRYPSESGIRYYVNQLLQETSHQQQTKMQRLKDLVIENHYDLSSTLSDFANELSIASQYTTLVMRPNHKQDIINNIHLIRANAYLVIMVVVFTSGHVEHLHLASEVPLSNDELTKISNFVTAKYNEWNNHRFENELNAFVKSDTEKDFIKDMLNMIDIHFDNQSNGIFMGGKVKLIDALNESNVSSIQPILQYIESNKITQLLDEMSNTSINVKIGHEIESSLSDISIVTSEYHIDDRLKGQIAVIGPTAMNYQNVIRLLNTIW.

The protein belongs to the HrcA family.

Its function is as follows. Negative regulator of class I heat shock genes (grpE-dnaK-dnaJ and groELS operons). Prevents heat-shock induction of these operons. This chain is Heat-inducible transcription repressor HrcA, found in Staphylococcus saprophyticus subsp. saprophyticus (strain ATCC 15305 / DSM 20229 / NCIMB 8711 / NCTC 7292 / S-41).